We begin with the raw amino-acid sequence, 391 residues long: Yellow-related salivary protein ASP4 (391 aa).

Residues 1-18 (MKIFLCIIAVVSLQGVVA) form the signal peptide. The N-linked (GlcNAc...) asparagine glycan is linked to Asn-29.

It belongs to the major royal jelly protein family. Female salivary gland (at protein level).

Its subcellular location is the secreted. Probably modulates blood feeding of sand flies on vertebrate species by binding and sequestering different mediators involved in the host response. Binds biogenic amines. Binds serotonin and dopamine with high affinity. Binds adrenaline, octopamine and adrenaline with medium affinity. Binds histamine with low affinity. The polypeptide is Yellow-related salivary protein ASP4 (Phlebotomus orientalis (Phlebotomine sand fly)).